Reading from the N-terminus, the 422-residue chain is 4-hydroxy-3-methylbut-2-en-1-yl diphosphate synthase (flavodoxin) (422 aa).

Positions 316, 319, 362, and 369 each coordinate [4Fe-4S] cluster.

It belongs to the IspG family. [4Fe-4S] cluster is required as a cofactor.

It carries out the reaction (2E)-4-hydroxy-3-methylbut-2-enyl diphosphate + oxidized [flavodoxin] + H2O + 2 H(+) = 2-C-methyl-D-erythritol 2,4-cyclic diphosphate + reduced [flavodoxin]. The protein operates within isoprenoid biosynthesis; isopentenyl diphosphate biosynthesis via DXP pathway; isopentenyl diphosphate from 1-deoxy-D-xylulose 5-phosphate: step 5/6. Functionally, converts 2C-methyl-D-erythritol 2,4-cyclodiphosphate (ME-2,4cPP) into 1-hydroxy-2-methyl-2-(E)-butenyl 4-diphosphate. This is 4-hydroxy-3-methylbut-2-en-1-yl diphosphate synthase (flavodoxin) from Ehrlichia ruminantium (strain Welgevonden).